The primary structure comprises 342 residues: D-erythrose-4-phosphate dehydrogenase (342 aa).

11–12 (RI) contacts NAD(+). Substrate is bound by residues 153–155 (SCT), Arg199, 212–213 (TK), and Arg235. Cys154 serves as the catalytic Nucleophile. Asn317 serves as a coordination point for NAD(+).

This sequence belongs to the glyceraldehyde-3-phosphate dehydrogenase family. Epd subfamily. In terms of assembly, homotetramer.

The protein localises to the cytoplasm. It catalyses the reaction D-erythrose 4-phosphate + NAD(+) + H2O = 4-phospho-D-erythronate + NADH + 2 H(+). It participates in cofactor biosynthesis; pyridoxine 5'-phosphate biosynthesis; pyridoxine 5'-phosphate from D-erythrose 4-phosphate: step 1/5. Catalyzes the NAD-dependent conversion of D-erythrose 4-phosphate to 4-phosphoerythronate. This is D-erythrose-4-phosphate dehydrogenase from Shewanella denitrificans (strain OS217 / ATCC BAA-1090 / DSM 15013).